The chain runs to 735 residues: Cyclic nucleotide-gated channel cone photoreceptor subunit alpha (735 aa).

The Cytoplasmic portion of the chain corresponds to 1–214 (MAKINTQHSY…PSSNMYYNWL (214 aa)). The disordered stretch occupies residues 142–191 (VNFSNNTNEDKKEEKKEVKEEKKEEKKEEKKEEKKDDKKDDKKDDKKDDK). Basic and acidic residues predominate over residues 149–191 (NEDKKEEKKEVKEEKKEEKKEEKKEEKKDDKKDDKKDDKKDDK). Residues 215-236 (TIIAAPVFYNWCMLICRACFDE) form a helical membrane-spanning segment. Residues 237–246 (LQIDHIKLWL) are Extracellular-facing. The chain crosses the membrane as a helical span at residues 247–267 (FLDYCSDIIYVFDMFVRFRTG). At 268 to 292 (FLEQGLLVKDEKKLRDHYTQTVQFK) the chain is on the cytoplasmic side. Residues 293 to 311 (LDVLSLLPTDLAYLKLGLN) form a helical membrane-spanning segment. The Extracellular portion of the chain corresponds to 312-316 (YPELR). The helical transmembrane segment at 317-335 (FNRLLRIARLFEFFDRTET) threads the bilayer. At 336–342 (RTNYPNM) the chain is on the cytoplasmic side. A helical membrane pass occupies residues 343-366 (FRIGNLVLYILIIIHWNACIYFAI). At 367 to 389 (SKVIGFGTDSWVYPNVSIPEYGR) the chain is on the extracellular side. 2 consecutive transmembrane segments (helical) span residues 390–424 (LSRKYIYSLYWSTLTLTTIGETPPPVKDEEYLFVV) and 425–449 (IDFLVGVLIFATIVGNVGSMISNMN). Residues 450 to 735 (ASRAEFQAKV…PEKPEEQKKD (286 aa)) are Cytoplasmic-facing. 3',5'-cyclic GMP-binding positions include 532–654 (LLIE…DNLI), Glu-591, and Arg-606. Positions 715 to 735 (GSGSLSVGEPEPEKPEEQKKD) are disordered. The span at 725–735 (EPEKPEEQKKD) shows a compositional bias: basic and acidic residues.

It belongs to the cyclic nucleotide-gated cation channel (TC 1.A.1.5) family.

Its subcellular location is the membrane. In terms of biological role, visual signal transduction is mediated by a G-protein coupled cascade using cGMP as second messenger. This protein can be activated by cyclic GMP which leads to an opening of the cation channel and thereby causing a depolarization of cone photoreceptors. The sequence is that of Cyclic nucleotide-gated channel cone photoreceptor subunit alpha from Gallus gallus (Chicken).